A 92-amino-acid chain; its full sequence is Small ribosomal subunit protein uS19c (92 aa).

Belongs to the universal ribosomal protein uS19 family.

It localises to the plastid. It is found in the cyanelle. Protein S19 forms a complex with S13 that binds strongly to the 16S ribosomal RNA. The protein is Small ribosomal subunit protein uS19c (rps19) of Cyanophora paradoxa.